The sequence spans 268 residues: Hemin import ATP-binding protein HmuV (268 aa).

Residues 5-241 (LKAEAASFAL…ELIADVFDVA (237 aa)) enclose the ABC transporter domain. Residue 37-44 (GPNGAGKS) participates in ATP binding.

The protein belongs to the ABC transporter superfamily. Heme (hemin) importer (TC 3.A.1.14.5) family. In terms of assembly, the complex is composed of two ATP-binding proteins (HmuV), two transmembrane proteins (HmuU) and a solute-binding protein (HmuT).

It is found in the cell inner membrane. Functionally, part of the ABC transporter complex HmuTUV involved in hemin import. Responsible for energy coupling to the transport system. The chain is Hemin import ATP-binding protein HmuV from Rhodopseudomonas palustris (strain ATCC BAA-98 / CGA009).